Here is a 314-residue protein sequence, read N- to C-terminus: Vacuolar membrane protein VL3_4134 (314 aa).

The interval 32 to 60 (KPTSSVVSETSSKSLPSLTSSAFSTSSGA) is disordered. Residues 93–113 (VYIAVGAVIGAIFISILIWWL) traverse the membrane as a helical segment. Residues S148, S254, and S274 each carry the phosphoserine modification. Residues 240 to 309 (EERKLNLNRP…PSMFLDDVLN (70 aa)) are disordered. The segment covering 254–269 (SPERKEKKINSMEGYH) has biased composition (basic and acidic residues).

The protein belongs to the PRM5 family.

It is found in the vacuole membrane. In Saccharomyces cerevisiae (strain Zymaflore VL3) (Baker's yeast), this protein is Vacuolar membrane protein VL3_4134.